Reading from the N-terminus, the 202-residue chain is Adenosylcobalamin/alpha-ribazole phosphatase (202 aa).

The active-site Tele-phosphohistidine intermediate is the histidine 8. Glutamate 81 (proton donor/acceptor) is an active-site residue.

Belongs to the phosphoglycerate mutase family.

The enzyme catalyses adenosylcob(III)alamin 5'-phosphate + H2O = adenosylcob(III)alamin + phosphate. The catalysed reaction is alpha-ribazole 5'-phosphate + H2O = alpha-ribazole + phosphate. It functions in the pathway nucleoside biosynthesis; alpha-ribazole biosynthesis; alpha-ribazole from 5,6-dimethylbenzimidazole: step 2/2. Catalyzes the conversion of adenosylcobalamin 5'-phosphate to adenosylcobalamin (vitamin B12); involved in the assembly of the nucleotide loop of cobalamin. Also catalyzes the hydrolysis of the phospho group from alpha-ribazole 5'-phosphate to form alpha-ribazole. In Salmonella typhi, this protein is Adenosylcobalamin/alpha-ribazole phosphatase (cobC).